The chain runs to 71 residues: Phenoloxidase 3 (71 aa).

Cu cation is bound by residues histidine 3 and histidine 29.

This sequence belongs to the tyrosinase family. Requires Cu(2+) as cofactor. In terms of processing, upon activation, a trypsin type protease cleaves prophenol oxidase to yield the active enzyme. Hemocytes and plasma.

It is found in the secreted. The catalysed reaction is 2 L-dopa + O2 = 2 L-dopaquinone + 2 H2O. The enzyme catalyses L-tyrosine + O2 = L-dopaquinone + H2O. This is a copper-containing oxidase that functions in the formation of pigments such as melanins and other polyphenolic compounds. Catalyzes the rate-limiting conversions of tyrosine to DOPA, DOPA to DOPA-quinone and possibly 5,6 dihydroxyindole to indole-5'6 quinone. The sequence is that of Phenoloxidase 3 from Sarcophaga argyrostoma (Flesh fly).